The sequence spans 99 residues: Protein dpy-30 homolog (99 aa).

M1 is modified (N-acetylmethionine). Positions 1 to 26 (MEPEQMLEGQTQVAENPHSEYGLTDN) are disordered. At S19 the chain carries Phosphoserine. K35 carries the N6-acetyllysine; alternate modification. K35 participates in a covalent cross-link: Glycyl lysine isopeptide (Lys-Gly) (interchain with G-Cter in SUMO2); alternate.

This sequence belongs to the dpy-30 family. As to quaternary structure, homodimer. Core component of several methyltransferase-containing complexes including MLL1/MLL, MLL2/3 (also named ASCOM complex) and MLL4/WBP7. Each complex is at least composed of ASH2L, RBBP5, WDR5, DPY30, one or more specific histone methyltransferases (KMT2A/MLL1, KMT2D/MLL2, KMT2C/MLL3 and KMT2B/MLL4), and the facultative components MEN1, HCFC1, HCFC2, NCOA6, KDM6A, PAXIP1/PTIP, PAGR1 and alpha- and beta-tubulin. Interacts with ASH2L; the interaction is direct. Interacts with ARFGEF1. Component of the SET1 complex, at least composed of the catalytic subunit (SETD1A or SETD1B), WDR5, WDR82, RBBP5, ASH2L/ASH2, CXXC1/CFP1, HCFC1 and DPY30.

The protein resides in the nucleus. The protein localises to the golgi apparatus. It is found in the trans-Golgi network. Functionally, as part of the MLL1/MLL complex, involved in the methylation of histone H3 at 'Lys-4', particularly trimethylation. Histone H3 'Lys-4' methylation represents a specific tag for epigenetic transcriptional activation. May play some role in histone H3 acetylation. In embryonic stem cells, may play a crucial role in retinoic acid-induced differentiation along the neural lineage, regulating gene induction and H3 'Lys-4' methylation at key developmental loci. May also play an indirect or direct role in endosomal transport. The polypeptide is Protein dpy-30 homolog (DPY30) (Bos taurus (Bovine)).